Reading from the N-terminus, the 484-residue chain is Putative cysteine ligase BshC (484 aa).

Positions 372-435 (RAFRDRVEGL…AARDEVLARH (64 aa)) form a coiled coil.

It belongs to the BshC family.

In Thermus thermophilus (strain ATCC 27634 / DSM 579 / HB8), this protein is Putative cysteine ligase BshC.